Consider the following 101-residue polypeptide: MFDQTTHTEVHQLTVGKIETASGAIKPQLLRDAVKRAVTNFFAQMDGQEAEEVYEMVLSEVEAPLLDIIMQHTRGNQTRAANMLGINRGTLRKKLKKYGMN.

The segment at residues glutamine 77–lysine 96 is a DNA-binding region (H-T-H motif).

This sequence belongs to the transcriptional regulatory Fis family. Homodimer.

Functionally, activates ribosomal RNA transcription. Plays a direct role in upstream activation of rRNA promoters. The sequence is that of DNA-binding protein Fis from Shewanella halifaxensis (strain HAW-EB4).